The sequence spans 215 residues: Ribonuclease T (215 aa).

One can recognise an Exonuclease domain in the interval 20–194; that stretch reads VVIDVETAGF…YDTERTAVLF (175 aa). Mg(2+) contacts are provided by Asp-23, Glu-25, His-181, and Asp-186. The active-site Proton donor/acceptor is His-181.

This sequence belongs to the RNase T family. In terms of assembly, homodimer. It depends on Mg(2+) as a cofactor.

In terms of biological role, trims short 3' overhangs of a variety of RNA species, leaving a one or two nucleotide 3' overhang. Responsible for the end-turnover of tRNA: specifically removes the terminal AMP residue from uncharged tRNA (tRNA-C-C-A). Also appears to be involved in tRNA biosynthesis. This Citrobacter koseri (strain ATCC BAA-895 / CDC 4225-83 / SGSC4696) protein is Ribonuclease T.